A 381-amino-acid polypeptide reads, in one-letter code: Alkanesulfonate monooxygenase (381 aa).

The protein belongs to the SsuD family. Homotetramer.

It catalyses the reaction an alkanesulfonate + FMNH2 + O2 = an aldehyde + FMN + sulfite + H2O + 2 H(+). Catalyzes the desulfonation of aliphatic sulfonates. This is Alkanesulfonate monooxygenase from Escherichia coli (strain SMS-3-5 / SECEC).